The following is a 492-amino-acid chain: MKYKDLRDFIAMLEQQGKLKRVAHPISPYLEMTEIADRVLRAEGPALLFENPIKPDGTRYGYPVLANLFGTPERVAMGMGADSVSKLREIGQTLAYLKEPEPPKGIKDAFSKLPLLKDIWSMAPNVVKNAPCQEIVWEGEDVDLYQLPIQHCWPEDVAPLVTWGLTVTRGPHKKRQNLGIYRQQLIGKNKLIMRWLSHRGGALDYQEFRKLNPDTPYPVAVVLGCDPATILGAVTPVPDTLSEYQFAGLLRGSRTELVKCIGNDLQVPARAEIVLEGVIHPNETALEGPYGDHTGYYNEQDYFPVFTVERITMRENPIYHSTYTGKPPDEPAVLGVALNEVFVPLLQKQFPEITDFYLPPEGCSYRMAVVSMKKQYAGHAKRVMMGCWSFLRQFMYTKFIIVVDDDVNVRDWKEVIWAVTTRMDPVRDTVLVENTPIDYLDFASPVSGLGGKMGLDATNKWPGETDREWGRVIKKDPAVTAKIDGIWEELGL.

Asn-177 lines the Mn(2+) pocket. Prenylated FMN is bound by residues 180-182 (IYR), 194-196 (RWL), and 199-200 (RG). Glu-243 contributes to the Mn(2+) binding site. The active-site Proton donor is the Asp-292.

Belongs to the UbiD family. As to quaternary structure, homohexamer. The cofactor is prenylated FMN. Mn(2+) is required as a cofactor.

The protein resides in the cell membrane. It catalyses the reaction a 4-hydroxy-3-(all-trans-polyprenyl)benzoate + H(+) = a 2-(all-trans-polyprenyl)phenol + CO2. The protein operates within cofactor biosynthesis; ubiquinone biosynthesis. Functionally, catalyzes the decarboxylation of 3-octaprenyl-4-hydroxy benzoate to 2-octaprenylphenol, an intermediate step in ubiquinone biosynthesis. This chain is 3-octaprenyl-4-hydroxybenzoate carboxy-lyase, found in Neisseria meningitidis serogroup B (strain ATCC BAA-335 / MC58).